Consider the following 524-residue polypeptide: GMP synthase [glutamine-hydrolyzing] (524 aa).

Residues 9 to 207 form the Glutamine amidotransferase type-1 domain; sequence RILILDFGSQ…VIHICQCIPN (199 aa). The active-site Nucleophile is cysteine 86. Active-site residues include histidine 181 and glutamate 183. The 192-residue stretch at 208–399 folds into the GMPS ATP-PPase domain; it reads WTTKHIIEDS…LGLPADLIYR (192 aa). Position 235–241 (235–241) interacts with ATP; the sequence is SGGVDSA.

Homodimer.

It catalyses the reaction XMP + L-glutamine + ATP + H2O = GMP + L-glutamate + AMP + diphosphate + 2 H(+). It functions in the pathway purine metabolism; GMP biosynthesis; GMP from XMP (L-Gln route): step 1/1. Catalyzes the synthesis of GMP from XMP. In Coxiella burnetii (strain CbuG_Q212) (Coxiella burnetii (strain Q212)), this protein is GMP synthase [glutamine-hydrolyzing].